The following is a 69-amino-acid chain: DNA-directed RNA polymerase subunit epsilon (69 aa).

It belongs to the RNA polymerase subunit epsilon family. RNAP is composed of a core of 2 alpha, a beta and a beta' subunit. The core is associated with a delta subunit, and at least one of epsilon or omega. When a sigma factor is associated with the core the holoenzyme is formed, which can initiate transcription.

The catalysed reaction is RNA(n) + a ribonucleoside 5'-triphosphate = RNA(n+1) + diphosphate. A non-essential component of RNA polymerase (RNAP). In Listeria welshimeri serovar 6b (strain ATCC 35897 / DSM 20650 / CCUG 15529 / CIP 8149 / NCTC 11857 / SLCC 5334 / V8), this protein is DNA-directed RNA polymerase subunit epsilon.